The sequence spans 497 residues: Probable malate:quinone oxidoreductase (497 aa).

The protein belongs to the MQO family. FAD is required as a cofactor.

The catalysed reaction is (S)-malate + a quinone = a quinol + oxaloacetate. It participates in carbohydrate metabolism; tricarboxylic acid cycle; oxaloacetate from (S)-malate (quinone route): step 1/1. This chain is Probable malate:quinone oxidoreductase, found in Exiguobacterium sibiricum (strain DSM 17290 / CCUG 55495 / CIP 109462 / JCM 13490 / 255-15).